We begin with the raw amino-acid sequence, 302 residues long: NmrA-like family domain-containing protein DDB_G0286605 (302 aa).

NADP(+) contacts are provided by residues 9-14 (GGTGYQ), 35-39 (RNPES), 56-57 (DE), 78-80 (TNS), lysine 130, and 157-160 (YFQN).

It belongs to the NmrA-type oxidoreductase family.

In terms of biological role, may be a redox sensor protein. In Dictyostelium discoideum (Social amoeba), this protein is NmrA-like family domain-containing protein DDB_G0286605.